A 364-amino-acid chain; its full sequence is Adenine deaminase (364 aa).

3 residues coordinate Zn(2+): histidine 25, histidine 27, and histidine 221. Residue glutamate 224 is the Proton donor of the active site. A Zn(2+)-binding site is contributed by aspartate 301. Aspartate 302 lines the substrate pocket.

This sequence belongs to the metallo-dependent hydrolases superfamily. Adenosine and AMP deaminases family. Adenine deaminase type 2 subfamily. The cofactor is Zn(2+).

The protein resides in the cytoplasm. It is found in the nucleus. It catalyses the reaction adenine + H2O + H(+) = hypoxanthine + NH4(+). Catalyzes the hydrolytic deamination of adenine to hypoxanthine. Plays an important role in the purine salvage pathway and in nitrogen catabolism. Has no activity with adenosine as a substrate. This Emericella nidulans (strain FGSC A4 / ATCC 38163 / CBS 112.46 / NRRL 194 / M139) (Aspergillus nidulans) protein is Adenine deaminase (aah1).